The sequence spans 930 residues: A disintegrin and metalloproteinase with thrombospondin motifs 5 (930 aa).

The signal sequence occupies residues 1–16; that stretch reads MLLGWASLLLCAFRLP. Residues 17–261 constitute a propeptide that is removed on maturation; that stretch reads LAAVGPAATP…PQTWWRRRRR (245 aa). Disordered regions lie at residues 24 to 69 and 206 to 231; these read ATPA…QRRR and RASC…PSGR. Residues 31–42 are compositionally biased toward low complexity; the sequence is AGQPPTAAAAAQ. Basic and acidic residues predominate over residues 46 to 59; that stretch reads RQGEEVQERAEPPG. The short motif at 207–214 is the Cysteine switch element; sequence ASCETPAS. Cys209 contacts Zn(2+). Residues 267–476 form the Peptidase M12B domain; sequence RQVELLLVAD…GHGNCLLDLP (210 aa). Disulfide bonds link Cys342/Cys394, Cys371/Cys376, Cys388/Cys471, Cys426/Cys455, Cys497/Cys519, Cys508/Cys529, Cys514/Cys548, and Cys542/Cys553. His410 provides a ligand contact to Zn(2+). Residue Glu411 is part of the active site. The Zn(2+) site is built by His414 and His420. One can recognise a Disintegrin domain in the interval 485–566; sequence ELPGQTYDAT…TKKKYYSTSS (82 aa). A glycan (N-linked (GlcNAc...) asparagine) is linked at Asn498. Positions 567–622 constitute a TSP type-1 1 domain; it reads HGNWGSWGSWGQCSRSCGGGVQFAYRHCNNPAPRNNGRYCTGKRAIYRSCSLMPCP. C-linked (Man) tryptophan glycosylation is found at Trp570 and Trp573. 3 disulfide bridges follow: Cys579–Cys616, Cys583–Cys621, and Cys594–Cys606. Ser582 is a glycosylation site (O-linked (Fuc...) serine). Asn728, Asn802, and Asn807 each carry an N-linked (GlcNAc...) asparagine glycan. The spacer stretch occupies residues 732–874; that stretch reads TKIVGTFNKK…HGSNKVGSHT (143 aa). One can recognise a TSP type-1 2 domain in the interval 875–929; that stretch reads SQPQWVTGPWLACSRTCDTGWHTRTVQCQDGNRKLAKGCPLSQRPSAFKQCLLKK.

Zn(2+) serves as cofactor. The precursor is cleaved by furin and PCSK7 outside of the cell. Post-translationally, glycosylated. Can be O-fucosylated by POFUT2 on a serine or a threonine residue found within the consensus sequence C1-X(2)-(S/T)-C2-G of the TSP type-1 repeat domains where C1 and C2 are the first and second cysteine residue of the repeat, respectively. Fucosylated repeats can then be further glycosylated by the addition of a beta-1,3-glucose residue by the glucosyltransferase, B3GALTL. Fucosylation mediates the efficient secretion of ADAMTS family members. Can also be C-glycosylated with one or two mannose molecules on tryptophan residues within the consensus sequence W-X-X-W of the TPRs, and N-glycosylated. These other glycosylations can also facilitate secretion. As to expression, expressed at low level in placenta primarily but also detected in heart and brain, cervix, uterus, bladder, esophagus, rib cartilage, chondroblastoma, fibrous tissue and a joint capsule from an arthritic patient.

The protein localises to the secreted. It localises to the extracellular space. It is found in the extracellular matrix. In terms of biological role, metalloproteinase that plays an important role in connective tissue organization, development, inflammation and cell migration. Extracellular matrix (ECM) degrading enzyme that show proteolytic activity toward the hyalectan group of chondroitin sulfate proteoglycans (CSPGs) including ACAN, VCAN, BCAN and NCAN. Cleavage within the hyalectans occurs at Glu-Xaa recognition motifs. Plays a role in embryonic development, including limb and cardiac morphogenesis, and skeletal muscle development through its VCAN remodeling properties. Cleaves VCAN in the pericellular matrix surrounding myoblasts, facilitating myoblast contact and fusion which is required for skeletal muscle development and regeneration. Participates in development of brown adipose tissue and browning of white adipose tissue. Plays an important role for T-lymphocyte migration from draining lymph nodes following viral infection. The polypeptide is A disintegrin and metalloproteinase with thrombospondin motifs 5 (ADAMTS5) (Homo sapiens (Human)).